Consider the following 560-residue polypeptide: SET domain-containing protein 4 (560 aa).

2 disordered regions span residues methionine 1–glutamine 61 and lysine 125–asparagine 157. A compositionally biased stretch (low complexity) spans serine 26 to serine 38. Residues leucine 47 to serine 59 show a composition bias toward polar residues. A compositionally biased stretch (basic and acidic residues) spans glutamate 141–asparagine 157. Residues lysine 160–aspartate 210 form a PHD-type zinc finger. The 130-residue stretch at alanine 346 to glutamine 475 folds into the SET domain.

It belongs to the SET3 family.

Its function is as follows. Putative chromatin regulator. This Saccharomyces cerevisiae (strain ATCC 204508 / S288c) (Baker's yeast) protein is SET domain-containing protein 4 (SET4).